Consider the following 464-residue polypeptide: MMRSSTLKLRNKMLKVSDIIQIKIDKIVFGGEGLGYYNGFAVFVPMSIPEDELEIEIISIKKTYARGLIKNIIKASPERIDNHKFTFEDFYGCDFAMLKYESQLKYKRFMVEEVIRKIAGLSDIEISDVLASEDIYNYRNKIIEPFSVYANKIITGFFKRKSHEVFEVDENILNSKLGNKIIKELKEILNKNKISVYDENTHKGILRNIMIRTNSNNEAMVVLIINSNKITENIKKLLFKLRENIEEIKSIYISLNSKKTNTVIGEKNILIYGEKSIKENINRIEFHISPTSFFQINVKQAKRLYDIAISFFDNIDNKYIVDAYSGTGTIGMIIAKKAKKVYAIEIVKSASEDGEKTAKENGIENIEFINGAVEKELVKLVNNNQKIDTIIFDPPRKGLETSIIDKVAELNLKEVVYISCNPSTFARDVKLFSEKGYVLKKLQAVDMFPQTSHIECVGLIERKI.

The region spanning 13–71 is the TRAM domain; the sequence is MLKVSDIIQIKIDKIVFGGEGLGYYNGFAVFVPMSIPEDELEIEIISIKKTYARGLIKN. Positions 295, 324, 345, and 393 each coordinate S-adenosyl-L-methionine. Residue cysteine 420 is the Nucleophile of the active site.

It belongs to the class I-like SAM-binding methyltransferase superfamily. RNA M5U methyltransferase family.

This is an uncharacterized protein from Fusobacterium nucleatum subsp. nucleatum (strain ATCC 25586 / DSM 15643 / BCRC 10681 / CIP 101130 / JCM 8532 / KCTC 2640 / LMG 13131 / VPI 4355).